A 176-amino-acid polypeptide reads, in one-letter code: Protein GrpE (176 aa).

This sequence belongs to the GrpE family. Homodimer.

It localises to the cytoplasm. Participates actively in the response to hyperosmotic and heat shock by preventing the aggregation of stress-denatured proteins, in association with DnaK and GrpE. It is the nucleotide exchange factor for DnaK and may function as a thermosensor. Unfolded proteins bind initially to DnaJ; upon interaction with the DnaJ-bound protein, DnaK hydrolyzes its bound ATP, resulting in the formation of a stable complex. GrpE releases ADP from DnaK; ATP binding to DnaK triggers the release of the substrate protein, thus completing the reaction cycle. Several rounds of ATP-dependent interactions between DnaJ, DnaK and GrpE are required for fully efficient folding. The chain is Protein GrpE from Thermoplasma volcanium (strain ATCC 51530 / DSM 4299 / JCM 9571 / NBRC 15438 / GSS1).